The primary structure comprises 704 residues: Polyribonucleotide nucleotidyltransferase (704 aa).

The Mg(2+) site is built by aspartate 490 and aspartate 496. Positions 557–616 (PKIEMIQIKPAKIKDVIGKGGETINSIIDETGVKIDIDQDGNVSIASSDAEMIKKAIKII) constitute a KH domain. The 69-residue stretch at 626-694 (GQVYLAKVVR…KQGRVNVSRK (69 aa)) folds into the S1 motif domain.

Belongs to the polyribonucleotide nucleotidyltransferase family. It depends on Mg(2+) as a cofactor.

It localises to the cytoplasm. It carries out the reaction RNA(n+1) + phosphate = RNA(n) + a ribonucleoside 5'-diphosphate. Functionally, involved in mRNA degradation. Catalyzes the phosphorolysis of single-stranded polyribonucleotides processively in the 3'- to 5'-direction. The sequence is that of Polyribonucleotide nucleotidyltransferase from Enterococcus faecalis (strain ATCC 700802 / V583).